The following is a 486-amino-acid chain: Cardiolipin synthase A (486 aa).

The next 2 membrane-spanning stretches (helical) occupy residues 3-23 (TFYT…IAGV) and 38-58 (MAWL…YLSF). PLD phosphodiesterase domains follow at residues 219–246 (MDLR…VDPR) and 399–426 (EGGL…DMRS). Catalysis depends on residues His224, Lys226, Asp231, His404, Lys406, and Asp411.

The protein belongs to the phospholipase D family. Cardiolipin synthase subfamily. ClsA sub-subfamily.

The protein localises to the cell inner membrane. The catalysed reaction is 2 a 1,2-diacyl-sn-glycero-3-phospho-(1'-sn-glycerol) = a cardiolipin + glycerol. Functionally, catalyzes the reversible phosphatidyl group transfer from one phosphatidylglycerol molecule to another to form cardiolipin (CL) (diphosphatidylglycerol) and glycerol. The polypeptide is Cardiolipin synthase A (Citrobacter koseri (strain ATCC BAA-895 / CDC 4225-83 / SGSC4696)).